The chain runs to 417 residues: Fatty-acid peroxygenase (417 aa).

Cys-363 is a binding site for heme.

Belongs to the cytochrome P450 family. The cofactor is heme.

The catalysed reaction is a 1,2-saturated fatty acid + H2O2 = a 2-hydroxy fatty acid + H2O. The enzyme catalyses a 2,3-saturated fatty acid + H2O2 = a 3-hydroxy fatty acid + H2O. It catalyses the reaction tetradecanoate + H2O2 = (3R)-hydroxytetradecanoate + H2O. It carries out the reaction tetradecanoate + H2O2 = (2R)-hydroxytetradecanoate + H2O. The catalysed reaction is tetradecanoate + H2O2 = (2S)-hydroxytetradecanoate + H2O. Functionally, catalyzes the alpha- and beta-hydroxylation of myristic acid in the presence of hydrogen peroxide. The sequence is that of Fatty-acid peroxygenase (cypC) from Bacillus subtilis (strain 168).